The following is a 429-amino-acid chain: UDP-N-acetylglucosamine 1-carboxyvinyltransferase (429 aa).

22–23 (KN) contributes to the phosphoenolpyruvate binding site. Arg102 serves as a coordination point for UDP-N-acetyl-alpha-D-glucosamine. The active-site Proton donor is the Cys126. Cys126 carries the 2-(S-cysteinyl)pyruvic acid O-phosphothioketal modification. Residues 131–135 (RPVDL), Asp316, and Ile338 contribute to the UDP-N-acetyl-alpha-D-glucosamine site.

This sequence belongs to the EPSP synthase family. MurA subfamily.

It is found in the cytoplasm. It catalyses the reaction phosphoenolpyruvate + UDP-N-acetyl-alpha-D-glucosamine = UDP-N-acetyl-3-O-(1-carboxyvinyl)-alpha-D-glucosamine + phosphate. It functions in the pathway cell wall biogenesis; peptidoglycan biosynthesis. Its function is as follows. Cell wall formation. Adds enolpyruvyl to UDP-N-acetylglucosamine. The protein is UDP-N-acetylglucosamine 1-carboxyvinyltransferase of Nitrobacter winogradskyi (strain ATCC 25391 / DSM 10237 / CIP 104748 / NCIMB 11846 / Nb-255).